Here is a 67-residue protein sequence, read N- to C-terminus: Conotoxin Cl14.2b (67 aa).

The N-terminal stretch at 1–20 (MNVTVMFLVLLLLTMPLTDG) is a signal peptide. Positions 21-48 (FNIRATNGGELFGPVQRDAGNVLDHGFQ) are excised as a propeptide.

Belongs to the conotoxin L superfamily. Contains 2 disulfide bonds. In terms of tissue distribution, expressed by the venom duct.

The protein localises to the secreted. In terms of biological role, increases calcium current amplitude through Cav1.2/Cav1.3 channels in rat pancreatic beta-cells, which is a prerequisite for eliciting insulin secretion. Stimulates insulin secretion in NIT-1 insulinoma cell lines. In vivo, significantly decreases mice blood glucose levels as of 45 minutes after treatment, similarly to insulin treatment. Has a potential therapeutic use in endocrinal pathologies such as early stages of type 2 diabetes where the pancreas's capability to produce insulin is still effective. This Californiconus californicus (California cone) protein is Conotoxin Cl14.2b.